Consider the following 369-residue polypeptide: Peptide chain release factor subunit 1 (369 aa).

The protein belongs to the eukaryotic release factor 1 family. In terms of assembly, heterodimer of two subunits, one of which binds GTP.

The protein localises to the cytoplasm. Functionally, directs the termination of nascent peptide synthesis (translation) in response to the termination codons UAA, UAG and UGA. This is Peptide chain release factor subunit 1 (prf1) from Saccharolobus solfataricus (strain ATCC 35092 / DSM 1617 / JCM 11322 / P2) (Sulfolobus solfataricus).